We begin with the raw amino-acid sequence, 305 residues long: Putative UDP-glucose 4-epimerase (305 aa).

Residues 10–11 (FI), 30–35 (DNLTTG), 50–51 (DI), and 71–75 (QAAQI) contribute to the NAD(+) site. Positions 115 and 140 each coordinate substrate. The NAD(+) site is built by Tyr140 and Lys144. Catalysis depends on Tyr140, which acts as the Proton acceptor. Residues Asn169, 183-184 (VI), 198-200 (IIF), Arg207, and 263-266 (REGE) contribute to the substrate site.

This sequence belongs to the NAD(P)-dependent epimerase/dehydratase family. NAD(+) is required as a cofactor.

The catalysed reaction is UDP-alpha-D-glucose = UDP-alpha-D-galactose. Its pathway is carbohydrate metabolism; galactose metabolism. Its function is as follows. Involved in the metabolism of galactose. Catalyzes the conversion of UDP-galactose (UDP-Gal) to UDP-glucose (UDP-Glc) through a mechanism involving the transient reduction of NAD. The polypeptide is Putative UDP-glucose 4-epimerase (Methanocaldococcus jannaschii (strain ATCC 43067 / DSM 2661 / JAL-1 / JCM 10045 / NBRC 100440) (Methanococcus jannaschii)).